We begin with the raw amino-acid sequence, 443 residues long: METLASLYNDHLAELQKRAREVLTRNKLDALLIHSGELQRIFQDDRSYPFKVNAHFKAWVPVTSVPNCWLWVDGVNKPKLWFYSPVDYWHSVEPLPESFWTRSVELMPLANADDIAQQLPAQRERVGYIGYAQQRARDLGILAENVNPKAVLNYLDFHRSIKTGYELACMREAQKTAVMGHRAAHEAFLSGMSEFDINQAYLTATGHRDTDVPYDNIVALNEHASVLHYTTLDHQPPSEMLSFLLDAGAEYNGYAADLTRTYAGQSGSDFAQLIKDLNGEQLALMDTIKAGVRYTDYHVQMHQRVAKLLKSHKLVTGISEEAMVEQGLTTPFLPHGLGHPLGLQVHDSAGFMQDEQGTHLAAPSKYPYLRCTRMLQPGMVLTIEPGMYFIDSLLAPWRSGEFSQHFAWDRIDALKPYGGIRIEDNIVIHEKRIENMTRDLNLA.

Mn(2+) is bound by residues Asp-246, Asp-257, His-339, Glu-384, and Glu-423.

The protein belongs to the peptidase M24B family. Bacterial-type prolidase subfamily. Mn(2+) serves as cofactor.

The catalysed reaction is Xaa-L-Pro dipeptide + H2O = an L-alpha-amino acid + L-proline. In terms of biological role, splits dipeptides with a prolyl residue in the C-terminal position. The chain is Xaa-Pro dipeptidase from Serratia proteamaculans (strain 568).